The primary structure comprises 387 residues: Pyrophosphate--fructose 6-phosphate 1-phosphotransferase 3 (387 aa).

Gly-15 serves as a coordination point for diphosphate. Residue Asp-114 coordinates Mg(2+). Substrate is bound by residues 140-142 (TID), 186-188 (MGR), Glu-247, and 308-311 (YELR). The active-site Proton acceptor is the Asp-142.

This sequence belongs to the phosphofructokinase type A (PFKA) family. PPi-dependent PFK group II subfamily. Clade 'Short' sub-subfamily. Homotetramer. Requires Mg(2+) as cofactor.

It localises to the cytoplasm. It carries out the reaction beta-D-fructose 6-phosphate + diphosphate = beta-D-fructose 1,6-bisphosphate + phosphate + H(+). It functions in the pathway carbohydrate degradation; glycolysis; D-glyceraldehyde 3-phosphate and glycerone phosphate from D-glucose: step 3/4. With respect to regulation, non-allosteric. Catalyzes the phosphorylation of D-fructose 6-phosphate, the first committing step of glycolysis. Uses inorganic phosphate (PPi) as phosphoryl donor instead of ATP like common ATP-dependent phosphofructokinases (ATP-PFKs), which renders the reaction reversible, and can thus function both in glycolysis and gluconeogenesis. Consistently, PPi-PFK can replace the enzymes of both the forward (ATP-PFK) and reverse (fructose-bisphosphatase (FBPase)) reactions. In Trichomonas vaginalis (strain ATCC PRA-98 / G3), this protein is Pyrophosphate--fructose 6-phosphate 1-phosphotransferase 3 (pfk3).